The primary structure comprises 248 residues: Triosephosphate isomerase (248 aa).

Residue Asn9–Lys11 participates in substrate binding. Catalysis depends on His94, which acts as the Electrophile. The active-site Proton acceptor is the Glu166. Residues Gly172, Ser212, and Gly233–Gly234 each bind substrate.

The protein belongs to the triosephosphate isomerase family. In terms of assembly, homodimer.

The protein localises to the cytoplasm. The enzyme catalyses D-glyceraldehyde 3-phosphate = dihydroxyacetone phosphate. Its pathway is carbohydrate biosynthesis; gluconeogenesis. It participates in carbohydrate degradation; glycolysis; D-glyceraldehyde 3-phosphate from glycerone phosphate: step 1/1. In terms of biological role, involved in the gluconeogenesis. Catalyzes stereospecifically the conversion of dihydroxyacetone phosphate (DHAP) to D-glyceraldehyde-3-phosphate (G3P). In Clostridium acetobutylicum (strain ATCC 824 / DSM 792 / JCM 1419 / IAM 19013 / LMG 5710 / NBRC 13948 / NRRL B-527 / VKM B-1787 / 2291 / W), this protein is Triosephosphate isomerase.